Consider the following 501-residue polypeptide: ATP synthase subunit alpha (501 aa).

169 to 176 (GDRQTGKT) contacts ATP.

It belongs to the ATPase alpha/beta chains family. F-type ATPases have 2 components, CF(1) - the catalytic core - and CF(0) - the membrane proton channel. CF(1) has five subunits: alpha(3), beta(3), gamma(1), delta(1), epsilon(1). CF(0) has three main subunits: a(1), b(2) and c(9-12). The alpha and beta chains form an alternating ring which encloses part of the gamma chain. CF(1) is attached to CF(0) by a central stalk formed by the gamma and epsilon chains, while a peripheral stalk is formed by the delta and b chains.

The protein localises to the cell inner membrane. The enzyme catalyses ATP + H2O + 4 H(+)(in) = ADP + phosphate + 5 H(+)(out). Produces ATP from ADP in the presence of a proton gradient across the membrane. The alpha chain is a regulatory subunit. The polypeptide is ATP synthase subunit alpha (Campylobacter jejuni subsp. jejuni serotype O:23/36 (strain 81-176)).